The chain runs to 346 residues: Phospholipase A1 (346 aa).

Residues 1–26 form the signal peptide; that stretch reads MRKFAAIFVVFFVQCTHLYSLAQARA. Residues 27 to 37 constitute a propeptide that is removed on maturation; the sequence is EPDPGVVEYLK. Asn-44 and Asn-72 each carry an N-linked (GlcNAc...) asparagine glycan. The active-site Nucleophile is the Ser-167. N-linked (GlcNAc...) asparagine glycosylation is present at Asn-185. Catalysis depends on charge relay system residues Asp-195 and His-258.

It belongs to the AB hydrolase superfamily. Lipase family. In terms of processing, contains six disulfide bonds. Post-translationally, N-glycosylated; contains mannose. As to expression, expressed by the venom gland.

It is found in the secreted. The enzyme catalyses a 1,2-diacyl-sn-glycero-3-phosphocholine + H2O = a 2-acyl-sn-glycero-3-phosphocholine + a fatty acid + H(+). In terms of biological role, catalyzes the hydrolysis of phosphatidylcholine with phospholipase A1 activity. Induces hemolytic activity. Acts as an allergen. The sequence is that of Phospholipase A1 from Solenopsis invicta (Red imported fire ant).